The sequence spans 200 residues: Dephospho-CoA kinase (200 aa).

Residues 4 to 200 form the DPCK domain; it reads VLALTGGIAT…QLLIKIKEEG (197 aa). 12–17 is an ATP binding site; it reads ATGKST.

This sequence belongs to the CoaE family.

It localises to the cytoplasm. The enzyme catalyses 3'-dephospho-CoA + ATP = ADP + CoA + H(+). Its pathway is cofactor biosynthesis; coenzyme A biosynthesis; CoA from (R)-pantothenate: step 5/5. Catalyzes the phosphorylation of the 3'-hydroxyl group of dephosphocoenzyme A to form coenzyme A. The polypeptide is Dephospho-CoA kinase (Lactobacillus acidophilus (strain ATCC 700396 / NCK56 / N2 / NCFM)).